Here is a 634-residue protein sequence, read N- to C-terminus: Chaperone protein HtpG (634 aa).

The a; substrate-binding stretch occupies residues 1-342 (MTVDTDKQTL…SSDLSLNVSR (342 aa)). The segment at 343-559 (EILQSGPVVD…QGDLGLQMRQ (217 aa)) is b. Residues 560-634 (LLEASGQAVP…LNKLLLELSV (75 aa)) form a c region.

It belongs to the heat shock protein 90 family. In terms of assembly, homodimer.

The protein resides in the cytoplasm. In terms of biological role, molecular chaperone. Has ATPase activity. The chain is Chaperone protein HtpG from Xanthomonas oryzae pv. oryzae (strain MAFF 311018).